The sequence spans 262 residues: Autophagy-related protein 27 (262 aa).

Residues 1 to 20 (MLKMRLLLTWVLLVLPLVNA) form the signal peptide. The region spanning 21–170 (LKCANNRVLR…IIKGPSGCKK (150 aa)) is the MRH domain. At 21-185 (LKCANNRVLR…EDGDVEESSG (165 aa)) the chain is on the lumenal side. 3 cysteine pairs are disulfide-bonded: Cys23-Cys61, Cys73-Cys80, and Cys139-Cys168. Residues 186 to 206 (LSWFTWLFIYAIFFTVVYLVV) traverse the membrane as a helical segment. The Cytoplasmic segment spans residues 207 to 262 (TSYTQTRGGSIDDFRHDFVERAKQFFTSLPAFVREVVSKVLGSAPNAAERGGYSAV).

This sequence belongs to the ATG27 family.

The protein localises to the cytoplasmic vesicle membrane. Its subcellular location is the golgi apparatus membrane. The protein resides in the mitochondrion membrane. Regulates the cytoplasm to vacuole transport (Cvt) vesicle formation. This Vanderwaltozyma polyspora (strain ATCC 22028 / DSM 70294 / BCRC 21397 / CBS 2163 / NBRC 10782 / NRRL Y-8283 / UCD 57-17) (Kluyveromyces polysporus) protein is Autophagy-related protein 27 (ATG27).